Reading from the N-terminus, the 709-residue chain is Polyribonucleotide nucleotidyltransferase (709 aa).

Mg(2+)-binding residues include D487 and D493. A KH domain is found at 554-613 (PRIHTMKISSDKIKDVIGKGGAVIRALCEETGTTIEIEDDGTIKIAATEGAAAKEAIRRI). In terms of domain architecture, S1 motif spans 623 to 691 (GKIYTGKVMR…RQGRIRLSIK (69 aa)).

Belongs to the polyribonucleotide nucleotidyltransferase family. In terms of assembly, component of the RNA degradosome, which is a multiprotein complex involved in RNA processing and mRNA degradation. Mg(2+) serves as cofactor.

It is found in the cytoplasm. It carries out the reaction RNA(n+1) + phosphate = RNA(n) + a ribonucleoside 5'-diphosphate. In terms of biological role, involved in mRNA degradation. Catalyzes the phosphorolysis of single-stranded polyribonucleotides processively in the 3'- to 5'-direction. This Aliivibrio fischeri (strain ATCC 700601 / ES114) (Vibrio fischeri) protein is Polyribonucleotide nucleotidyltransferase.